The following is a 302-amino-acid chain: tRNA pseudouridine synthase B (302 aa).

Asp47 functions as the Nucleophile in the catalytic mechanism.

The protein belongs to the pseudouridine synthase TruB family. Type 1 subfamily.

It catalyses the reaction uridine(55) in tRNA = pseudouridine(55) in tRNA. Its function is as follows. Responsible for synthesis of pseudouridine from uracil-55 in the psi GC loop of transfer RNAs. This is tRNA pseudouridine synthase B from Ruegeria sp. (strain TM1040) (Silicibacter sp.).